The chain runs to 1586 residues: COP1-interactive protein 1 (1586 aa).

One can recognise an NAB domain in the interval 10–84 (LKSFFEPHFD…RQYDDLTGEI (75 aa)). A disordered region spans residues 88-119 (VNGKGESSSSSSSDSDSDHSSKRKVKRNGNGK). 4 coiled-coil regions span residues 128-411 (TGAL…LKES), 437-1196 (ASEL…LKEE), 1225-1336 (LETL…TEAT), and 1372-1406 (MESL…SNQK). LRR repeat units lie at residues 173 to 187 (SEEI…TEKL), 188 to 210 (EDEK…VAGK), 216 to 239 (NQKL…GIKR), 261 to 285 (TSNL…MNSA), and 287 to 309 (EENK…GQTT). Residues 249–262 (DWKTTSDQLKDETS) show a composition bias toward basic and acidic residues. The disordered stretch occupies residues 249-286 (DWKTTSDQLKDETSNLKQQLEASEQRVSELTSGMNSAE). The segment at 325–353 (KEKESEHSSLVELHKTHERESSSQVKELE) is disordered. LRR repeat units follow at residues 384 to 410 (IAEL…QLKE), 437 to 461 (ASEL…LKAA), 473 to 498 (VETM…KLKD), 560 to 586 (IAEL…QLKE), 613 to 637 (VSEL…LKDA), 649 to 674 (LEIM…ELKD), 768 to 792 (LSEL…LNAA), 824 to 850 (LAES…AHKR), 856 to 880 (VKEL…LNSS), 902 to 929 (ESTI…LFSL), 944 to 968 (LRGL…LKAA), 990 to 1014 (QIMV…ESKL), 1077 to 1101 (ISEL…LEDN), 1120 to 1144 (RAEL…SEEA), 1195 to 1220 (EEII…KIKG), 1247 to 1272 (VQMH…NLKN), 1372 to 1396 (MESL…ISNI), 1398 to 1417 (VKLR…LTEK), 1426 to 1448 (AKHL…TYRG), and 1450 to 1474 (IKEI…LTEK). The tract at residues 430-456 (QRDSSTRASELEAQLESSKQQVSDLSA) is disordered. The span at 444–455 (LESSKQQVSDLS) shows a compositional bias: polar residues. Residues 965-985 (LKAAEEESRTMSTKISETSDE) form a disordered region. Positions 1496–1530 (VIERNHEKEKMNKEIEKKDEEIKKLGGKVREDEKE) form a coiled coil.

As to quaternary structure, interacts with COP1 coiled-coil region. Mainly expressed in photosynthetic and vascular tissues. Accumulates in both dark-grown and light-grown seedlings roots and shoots, leaves and flowers (at protein level).

It is found in the cell membrane. The protein resides in the cytoplasm. It localises to the cytoskeleton. Functionally, positive regulator of abscisic acid (ABA)-mediated signaling pathways involved in abiotic stress responses (e.g. osmotic stress) and leading to various plant adaptation (e.g. stomata closure). This chain is COP1-interactive protein 1, found in Arabidopsis thaliana (Mouse-ear cress).